The sequence spans 166 residues: Peptide deformylase (166 aa).

Fe cation-binding residues include C88 and H130. The active site involves E131. H134 serves as a coordination point for Fe cation.

The protein belongs to the polypeptide deformylase family. Requires Fe(2+) as cofactor.

The catalysed reaction is N-terminal N-formyl-L-methionyl-[peptide] + H2O = N-terminal L-methionyl-[peptide] + formate. In terms of biological role, removes the formyl group from the N-terminal Met of newly synthesized proteins. Requires at least a dipeptide for an efficient rate of reaction. N-terminal L-methionine is a prerequisite for activity but the enzyme has broad specificity at other positions. This Caldicellulosiruptor bescii (strain ATCC BAA-1888 / DSM 6725 / KCTC 15123 / Z-1320) (Anaerocellum thermophilum) protein is Peptide deformylase.